A 378-amino-acid chain; its full sequence is Beta-1,3-galactosyltransferase 4 (378 aa).

Residues 1 to 8 (MQLRLFRR) are Cytoplasmic-facing. The helical; Signal-anchor for type II membrane protein transmembrane segment at 9 to 19 (LLLAALLLVIV) threads the bilayer. At 20–378 (WTLFGPSGLG…RCRAIAWLQS (359 aa)) the chain is on the lumenal side. Asn149 carries an N-linked (GlcNAc...) asparagine glycan.

This sequence belongs to the glycosyltransferase 31 family. In terms of tissue distribution, highly expressed in heart, skeletal muscle and pancreas and, to a lesser extent, in brain, placenta, kidney, liver and lung.

The protein resides in the golgi apparatus membrane. The catalysed reaction is a ganglioside GM2 (d18:1(4E)) + UDP-alpha-D-galactose = a ganglioside GM1 (d18:1(4E)) + UDP + H(+). The enzyme catalyses a ganglioside GM2 + UDP-alpha-D-galactose = a ganglioside GM1 + UDP + H(+). It carries out the reaction a ganglioside GD2 (d18:1(4E)) + UDP-alpha-D-galactose = a ganglioside GD1b (d18:1(4E)) + UDP + H(+). It catalyses the reaction a ganglioside GA2 (d18:1(4E)) + UDP-alpha-D-galactose = a ganglioside GA1 (d18:1(4E)) + UDP + H(+). Its pathway is protein modification; protein glycosylation. Functionally, involved in GM1/GD1B/GA1 ganglioside biosynthesis. This Homo sapiens (Human) protein is Beta-1,3-galactosyltransferase 4.